Here is a 100-residue protein sequence, read N- to C-terminus: Large ribosomal subunit protein bL21 (100 aa).

Belongs to the bacterial ribosomal protein bL21 family. As to quaternary structure, part of the 50S ribosomal subunit. Contacts protein L20.

Its function is as follows. This protein binds to 23S rRNA in the presence of protein L20. This chain is Large ribosomal subunit protein bL21, found in Wolbachia pipientis subsp. Culex pipiens (strain wPip).